We begin with the raw amino-acid sequence, 96 residues long: Evasin P1078 (96 aa).

The signal sequence occupies residues Met1–Ala28. Disulfide bonds link Cys48–Cys67, Cys52–Cys69, and Cys63–Cys80. Residue Asn51 is glycosylated (N-linked (GlcNAc...) asparagine). N-linked (GlcNAc...) asparagine glycosylation is present at Asn74.

The protein resides in the secreted. In terms of biological role, salivary chemokine-binding protein which binds to host chemokines CXCL1, CXCL2, CXCL3, CXCL5, CXCL6, CXCL11 and CXCL13. This Ixodes ricinus (Common tick) protein is Evasin P1078.